Reading from the N-terminus, the 311-residue chain is Probable cell division protein WhiA (311 aa).

The H-T-H motif DNA-binding region spans 274–307 (SLKELGSLLTPPLTKSGVNHRFRKLELIAEKIRN).

The protein belongs to the WhiA family.

Its function is as follows. Involved in cell division and chromosome segregation. This is Probable cell division protein WhiA from Carboxydothermus hydrogenoformans (strain ATCC BAA-161 / DSM 6008 / Z-2901).